The primary structure comprises 93 residues: Small ribosomal subunit protein uS19 (93 aa).

The protein belongs to the universal ribosomal protein uS19 family.

Functionally, protein S19 forms a complex with S13 that binds strongly to the 16S ribosomal RNA. The chain is Small ribosomal subunit protein uS19 from Kocuria rhizophila (strain ATCC 9341 / DSM 348 / NBRC 103217 / DC2201).